The chain runs to 279 residues: Dihydropteroate synthase type-1 (279 aa).

The 258-residue stretch at methionine 1–threonine 258 folds into the Pterin-binding domain. Asparagine 9 is a Mg(2+) binding site. (7,8-dihydropterin-6-yl)methyl diphosphate contacts are provided by residues aspartate 82, asparagine 101, aspartate 173, lysine 212, and arginine 246 to histidine 248.

Belongs to the DHPS family. Homodimer or homotrimer. It depends on Mg(2+) as a cofactor.

It catalyses the reaction (7,8-dihydropterin-6-yl)methyl diphosphate + 4-aminobenzoate = 7,8-dihydropteroate + diphosphate. The protein operates within cofactor biosynthesis; tetrahydrofolate biosynthesis; 7,8-dihydrofolate from 2-amino-4-hydroxy-6-hydroxymethyl-7,8-dihydropteridine diphosphate and 4-aminobenzoate: step 1/2. Catalyzes the condensation of para-aminobenzoate (pABA) with 6-hydroxymethyl-7,8-dihydropterin diphosphate (DHPt-PP) to form 7,8-dihydropteroate (H2Pte), the immediate precursor of folate derivatives. This Corynebacterium glutamicum (Brevibacterium saccharolyticum) protein is Dihydropteroate synthase type-1 (sulI).